The primary structure comprises 390 residues: Phosphoglycerate kinase (390 aa).

Residues aspartate 21–asparagine 23, arginine 36, histidine 59–arginine 62, arginine 114, and arginine 147 contribute to the substrate site. Residues lysine 198, glutamate 314, and glycine 340 to threonine 343 each bind ATP.

The protein belongs to the phosphoglycerate kinase family. In terms of assembly, monomer.

It is found in the cytoplasm. It carries out the reaction (2R)-3-phosphoglycerate + ATP = (2R)-3-phospho-glyceroyl phosphate + ADP. The protein operates within carbohydrate degradation; glycolysis; pyruvate from D-glyceraldehyde 3-phosphate: step 2/5. The chain is Phosphoglycerate kinase (pgk) from Buchnera aphidicola subsp. Acyrthosiphon pisum (strain APS) (Acyrthosiphon pisum symbiotic bacterium).